Reading from the N-terminus, the 88-residue chain is Cell division topological specificity factor (88 aa).

Belongs to the MinE family.

In terms of biological role, prevents the cell division inhibition by proteins MinC and MinD at internal division sites while permitting inhibition at polar sites. This ensures cell division at the proper site by restricting the formation of a division septum at the midpoint of the long axis of the cell. This chain is Cell division topological specificity factor, found in Psychromonas ingrahamii (strain DSM 17664 / CCUG 51855 / 37).